We begin with the raw amino-acid sequence, 324 residues long: Elongation factor P--(R)-beta-lysine ligase (324 aa).

75–77 is a substrate binding site; it reads SPE. ATP is bound by residues 99–101 and Asn-108; that span reads RNQ. Tyr-117 lines the substrate pocket. ATP is bound at residue 243–244; the sequence is EL. Glu-250 is a binding site for substrate. Residue Gly-299 coordinates ATP.

Belongs to the class-II aminoacyl-tRNA synthetase family. EpmA subfamily. In terms of assembly, homodimer.

The enzyme catalyses D-beta-lysine + L-lysyl-[protein] + ATP = N(6)-((3R)-3,6-diaminohexanoyl)-L-lysyl-[protein] + AMP + diphosphate + H(+). Functionally, with EpmB is involved in the beta-lysylation step of the post-translational modification of translation elongation factor P (EF-P). Catalyzes the ATP-dependent activation of (R)-beta-lysine produced by EpmB, forming a lysyl-adenylate, from which the beta-lysyl moiety is then transferred to the epsilon-amino group of a conserved specific lysine residue in EF-P. The sequence is that of Elongation factor P--(R)-beta-lysine ligase from Buchnera aphidicola subsp. Schizaphis graminum (strain Sg).